The sequence spans 136 residues: Large ribosomal subunit protein uL16 (136 aa).

Belongs to the universal ribosomal protein uL16 family. As to quaternary structure, part of the 50S ribosomal subunit.

Binds 23S rRNA and is also seen to make contacts with the A and possibly P site tRNAs. The polypeptide is Large ribosomal subunit protein uL16 (Enterobacter sp. (strain 638)).